Here is a 552-residue protein sequence, read N- to C-terminus: Carboxypeptidase Y homolog A (552 aa).

An N-terminal signal peptide occupies residues 1–18; that stretch reads MRIATSTLLVGAASAAFA. Residues 19-133 constitute a propeptide that is removed on maturation; sequence PQDGTQRVLN…KLDNYNLRAR (115 aa). Disulfide bonds link cysteine 187-cysteine 427, cysteine 321-cysteine 335, cysteine 345-cysteine 368, cysteine 352-cysteine 361, and cysteine 390-cysteine 397. Asparagine 218 carries an N-linked (GlcNAc...) asparagine glycan. Serine 274 is an active-site residue. The active site involves aspartate 466. Asparagine 516 is a glycosylation site (N-linked (GlcNAc...) asparagine). The active site involves histidine 527.

The protein belongs to the peptidase S10 family.

Its subcellular location is the vacuole. It carries out the reaction Release of a C-terminal amino acid with broad specificity.. In terms of biological role, vacuolar carboxypeptidase involved in degradation of small peptides. Digests preferentially peptides containing an aliphatic or hydrophobic residue in P1' position, as well as methionine, leucine or phenylalanine in P1 position of ester substrate. In Pyricularia oryzae (strain 70-15 / ATCC MYA-4617 / FGSC 8958) (Rice blast fungus), this protein is Carboxypeptidase Y homolog A (CPYA).